The following is a 229-amino-acid chain: MSIRRPQIPRLLLQNVSCMRNAQQILRHVNVSLHDGGALVLTGTNGSGKSTFLRMLAGFSKPSAGEILWNGHDITQSGIFQQYKLQLNWISLKDAIKERFTVLDNVQWFELLENKIGKAQPALELMGLGRLVKEKSRMLSMGQRKRLQLARLLAIDRPIWLLDEPSVALDDEGVRLLEYIIAEHRKKGGIVIVATHLPIDIEDAMILRLPPRFPRKMTLIDMLDRADIS.

Positions 11–228 constitute an ABC transporter domain; sequence LLLQNVSCMR…LIDMLDRADI (218 aa). 43–50 is an ATP binding site; sequence GTNGSGKS.

Belongs to the ABC transporter superfamily. ABCI family.

The protein resides in the membrane. The catalysed reaction is heme b(in) + ATP + H2O = heme b(out) + ADP + phosphate + H(+). Functionally, part of the ABC transporter complex CcmAB involved in the biogenesis of c-type cytochromes; once thought to export heme, this seems not to be the case, but its exact role is uncertain. Responsible for energy coupling to the transport system. The polypeptide is ABC transporter I family member 1 (ABCI1) (Arabidopsis thaliana (Mouse-ear cress)).